We begin with the raw amino-acid sequence, 66 residues long: Regulator of G-protein signaling 6 (66 aa).

The RGS domain maps to 1–66 (LAVQDLKKQP…EDAQEHIYKL (66 aa)).

As to quaternary structure, interacts with GNB5. Interacts with RGS7BP, leading to regulate the subcellular location of the heterodimer formed with GNB5. Interacts with GNAI1.

The protein resides in the cytoplasm. It localises to the cytosol. It is found in the membrane. Its subcellular location is the nucleus. The protein localises to the cell membrane. In terms of biological role, regulates G protein-coupled receptor signaling cascades. Inhibits signal transduction by increasing the GTPase activity of G protein alpha subunits, thereby driving them into their inactive GDP-bound form. The RGS6/GNB5 dimer enhances GNAO1 GTPase activity. This chain is Regulator of G-protein signaling 6 (Rgs6), found in Rattus norvegicus (Rat).